Reading from the N-terminus, the 429-residue chain is Adenylosuccinate synthetase (429 aa).

Residues 12–18 (GDEGKGK) and 40–42 (GHT) contribute to the GTP site. Catalysis depends on aspartate 13, which acts as the Proton acceptor. Residues aspartate 13 and glycine 40 each contribute to the Mg(2+) site. Residues 13-16 (DEGK), 38-41 (NAGH), threonine 129, arginine 143, glutamine 224, threonine 239, and arginine 303 each bind IMP. The active-site Proton donor is histidine 41. Residue 299 to 305 (VTTGRAR) participates in substrate binding. GTP-binding positions include arginine 305, 331–333 (KLD), and 413–415 (GVG).

Belongs to the adenylosuccinate synthetase family. As to quaternary structure, homodimer. It depends on Mg(2+) as a cofactor.

The protein resides in the cytoplasm. The enzyme catalyses IMP + L-aspartate + GTP = N(6)-(1,2-dicarboxyethyl)-AMP + GDP + phosphate + 2 H(+). It participates in purine metabolism; AMP biosynthesis via de novo pathway; AMP from IMP: step 1/2. Its function is as follows. Plays an important role in the de novo pathway of purine nucleotide biosynthesis. Catalyzes the first committed step in the biosynthesis of AMP from IMP. The protein is Adenylosuccinate synthetase of Rhodococcus erythropolis (strain PR4 / NBRC 100887).